Reading from the N-terminus, the 271-residue chain is Glutamate racemase (271 aa).

Residues 12 to 13 and 44 to 45 contribute to the substrate site; these read DS and YG. Cysteine 75 serves as the catalytic Proton donor/acceptor. 76-77 provides a ligand contact to substrate; sequence NS. Catalysis depends on cysteine 185, which acts as the Proton donor/acceptor. Residue 186–187 coordinates substrate; sequence TH.

It belongs to the aspartate/glutamate racemases family.

The catalysed reaction is L-glutamate = D-glutamate. It participates in cell wall biogenesis; peptidoglycan biosynthesis. Its function is as follows. Provides the (R)-glutamate required for cell wall biosynthesis. This is Glutamate racemase from Mycobacterium bovis (strain BCG / Pasteur 1173P2).